A 74-amino-acid polypeptide reads, in one-letter code: Large ribosomal subunit protein bL31 (74 aa).

The protein belongs to the bacterial ribosomal protein bL31 family. Type A subfamily. As to quaternary structure, part of the 50S ribosomal subunit.

Its function is as follows. Binds the 23S rRNA. In Synechococcus sp. (strain JA-2-3B'a(2-13)) (Cyanobacteria bacterium Yellowstone B-Prime), this protein is Large ribosomal subunit protein bL31.